The primary structure comprises 418 residues: AP-3 complex subunit mu-2 (418 aa).

One can recognise an MHD domain in the interval 176–417; the sequence is NNEAYFDVVE…MTKAGKFQVR (242 aa).

Belongs to the adaptor complexes medium subunit family. As to quaternary structure, adaptor protein complex 3 (AP-3) is a heterotetramer composed of two large adaptins (delta-type subunit AP3D1 and beta-type subunit AP3B1 or AP3B2), a medium adaptin (mu-type subunit AP3M1 or AP3M2) and a small adaptin (sigma-type subunit APS1 or AP3S2). AP-3 associates with the BLOC-1 complex.

The protein resides in the golgi apparatus. It is found in the cytoplasmic vesicle membrane. Component of the adaptor complexes which link clathrin to receptors in coated vesicles. Clathrin-associated protein complexes are believed to interact with the cytoplasmic tails of membrane proteins, leading to their selection and concentration. Ap47 is a subunit of the plasma membrane adaptor. In concert with the BLOC-1 complex, AP-3 is required to target cargos into vesicles assembled at cell bodies for delivery into neurites and nerve terminals. The protein is AP-3 complex subunit mu-2 (Ap3m2) of Mus musculus (Mouse).